We begin with the raw amino-acid sequence, 166 residues long: Small ribosomal subunit protein uS5 (166 aa).

Positions 11–74 (LNEKLIAVNR…EKARRNMFTI (64 aa)) constitute an S5 DRBM domain.

The protein belongs to the universal ribosomal protein uS5 family. As to quaternary structure, part of the 30S ribosomal subunit. Contacts proteins S4 and S8.

Functionally, with S4 and S12 plays an important role in translational accuracy. In terms of biological role, located at the back of the 30S subunit body where it stabilizes the conformation of the head with respect to the body. The polypeptide is Small ribosomal subunit protein uS5 (Aliivibrio salmonicida (strain LFI1238) (Vibrio salmonicida (strain LFI1238))).